The primary structure comprises 977 residues: Ubiquitin-like modifier-activating enzyme 7 (977 aa).

The protein belongs to the ubiquitin-activating E1 family. In terms of processing, ubiquitinated by RNF170.

It localises to the cytoplasm. The protein localises to the nucleus. Its pathway is protein modification; protein ubiquitination. Functionally, E1-activating enzyme that catalyzes the covalent conjugation of the ubiquitin-like protein product of ISG15 to additional interferons stimulated proteins (ISGs) as well as other cellular proteins such as P53 in a process termed protein ISGylation. Plays an essential role in antiviral immunity together with ISG15 by restricting the replication of many viruses including rabies virus, influenza virus, sindbis virus or rotavirus. This is Ubiquitin-like modifier-activating enzyme 7 from Mus musculus (Mouse).